The primary structure comprises 348 residues: NADH-ubiquinone oxidoreductase chain 2 (348 aa).

The next 10 membrane-spanning stretches (helical) occupy residues 3-23 (PTVL…TFIG), 25-45 (HWLL…PLMI), 59-79 (YFIT…TNAW), 95-115 (ATLA…HFWL), 149-171 (LNSN…GGLN), 178-198 (ILAY…HYSP), 199-219 (SLTL…FLLF), 242-262 (VIAL…GFMP), 274-294 (SLII…FFYL), and 324-344 (LILL…PLIL).

It belongs to the complex I subunit 2 family.

Its subcellular location is the mitochondrion inner membrane. The catalysed reaction is a ubiquinone + NADH + 5 H(+)(in) = a ubiquinol + NAD(+) + 4 H(+)(out). Functionally, core subunit of the mitochondrial membrane respiratory chain NADH dehydrogenase (Complex I) that is believed to belong to the minimal assembly required for catalysis. Complex I functions in the transfer of electrons from NADH to the respiratory chain. The immediate electron acceptor for the enzyme is believed to be ubiquinone. This chain is NADH-ubiquinone oxidoreductase chain 2 (MT-ND2), found in Scyliorhinus canicula (Small-spotted catshark).